The sequence spans 620 residues: Translocator protein BipB (620 aa).

A disordered region spans residues 58–95; that stretch reads QCDAQPAAHDARLDDKPALRAPQERDAPPLGASDTGSR. Basic and acidic residues predominate over residues 66–84; sequence HDARLDDKPALRAPQERDA. Residues 309–339 adopt a coiled-coil conformation; the sequence is EMQAKREAELQKKSDEYQAQVKKAEEMQKTM. The next 3 membrane-spanning stretches (helical) occupy residues 355–375, 401–421, and 430–450; these read FAAAAFTGGASLALAAVGLAL, AILKPLMEMISSLITKALVAC, and LAGAILGAVVTGVALVAAAFV.

Belongs to the SctE/SipB/YopB family.

The protein localises to the secreted. Its subcellular location is the host membrane. Plays a role in the bacterium-induced formation of multinucleated giant cell (MNGC), which is formed after host cell fusion, as well as in the intercellular spreading of bacteria and in the induction of apoptosis in macrophages. May act in concert with other effector proteins to induce fusion of host cell membranes. The sequence is that of Translocator protein BipB (bipB) from Burkholderia pseudomallei (strain 1710b).